The sequence spans 94 residues: MLTINATVRKEQGKGASRRLRVANRFPAIVYGGNEEPIAIDLDHNEVINQEHKSEFYADFVNLVIDGKATKVKVKAVQRHEYKPKITHIDFLRA.

It belongs to the bacterial ribosomal protein bL25 family. Part of the 50S ribosomal subunit; part of the 5S rRNA/L5/L18/L25 subcomplex. Contacts the 5S rRNA. Binds to the 5S rRNA independently of L5 and L18.

Functionally, this is one of the proteins that binds to the 5S RNA in the ribosome where it forms part of the central protuberance. In Proteus mirabilis (strain HI4320), this protein is Large ribosomal subunit protein bL25.